Reading from the N-terminus, the 374-residue chain is Alanine racemase (374 aa).

Lys-35 serves as the catalytic Proton acceptor; specific for D-alanine. Lys-35 is subject to N6-(pyridoxal phosphate)lysine. Substrate is bound at residue Arg-133. The Proton acceptor; specific for L-alanine role is filled by Tyr-264. Met-312 serves as a coordination point for substrate.

This sequence belongs to the alanine racemase family. Requires pyridoxal 5'-phosphate as cofactor.

The catalysed reaction is L-alanine = D-alanine. The protein operates within amino-acid biosynthesis; D-alanine biosynthesis; D-alanine from L-alanine: step 1/1. Functionally, catalyzes the interconversion of L-alanine and D-alanine. May also act on other amino acids. The sequence is that of Alanine racemase (alr) from Thermobifida fusca (strain YX).